The following is a 277-amino-acid chain: 2,3,4,5-tetrahydropyridine-2,6-dicarboxylate N-succinyltransferase (277 aa).

The substrate site is built by Arg-106 and Asp-143.

This sequence belongs to the transferase hexapeptide repeat family. In terms of assembly, homotrimer.

Its subcellular location is the cytoplasm. The catalysed reaction is (S)-2,3,4,5-tetrahydrodipicolinate + succinyl-CoA + H2O = (S)-2-succinylamino-6-oxoheptanedioate + CoA. It functions in the pathway amino-acid biosynthesis; L-lysine biosynthesis via DAP pathway; LL-2,6-diaminopimelate from (S)-tetrahydrodipicolinate (succinylase route): step 1/3. In Xylella fastidiosa (strain Temecula1 / ATCC 700964), this protein is 2,3,4,5-tetrahydropyridine-2,6-dicarboxylate N-succinyltransferase.